A 155-amino-acid polypeptide reads, in one-letter code: MGTRGPIGKRDEERVRRNTPENPTETISMIGTVEIPELGDMSYMGETHPLIEEMYDAIKQSAAVKFYEPTDWQFARLALYTLNQELIAAKHQGKPIGAMKLTAINQMLSALLLTEGDRRRVRLEIERAPADPTGGKVVDVTDVLKQRLAKASGGG.

Residues 1-24 (MGTRGPIGKRDEERVRRNTPENPT) form a disordered region. Residues 8-19 (GKRDEERVRRNT) are compositionally biased toward basic and acidic residues.

The sequence is that of Gene 5 protein (5) from Mycobacterium (Mycobacteriophage D29).